We begin with the raw amino-acid sequence, 203 residues long: Cbp/p300-interacting transactivator 1 (203 aa).

Disordered stretches follow at residues 1–24 (MPTM…DANQ) and 51–86 (TANG…PSFN). The segment covering 61–84 (PTSSSGSTSPIGSPTATPSSKPPS) has biased composition (low complexity). Residues 168–177 (LMSLVVELGL) carry the Nuclear export signal motif.

It belongs to the CITED family. As to quaternary structure, homodimer. Binds to RBM14. Interacts (via N-terminus) with HSPA8; the interaction suppresses the association of CITED1 with p300/CBP and SMAD-mediated transcription transactivation. Interacts (via C-terminus) with TOX3 (via HGM box); the interaction increases estrogen-response element (ERE)-dependent transcription and protection against cell death. Interacts with ESR1; the interaction occurs in a estrogen-dependent manner. Interacts (unphosphorylated form preferentially and via C-terminus) with EP300. Interacts (via C-terminus) with CREBBP. Interacts with EGR2. Post-translationally, phosphorylated. Phosphorylation changes in a cell cycle-dependent manner and reduces its transcriptional cofactor activity. In terms of tissue distribution, expressed in calvarial osteoblasts. Expressed in nulliparous mammary epithelial cells; absent in pregnant mice and in lacting mammary glands. Also expressed in mammary tumors (at protein level). Expressed only in melanocytes and testis. Expressed at high levels in the strongly pigmented melanoma cells but at low levels in the weakly pigmented cells.

It localises to the nucleus. Its subcellular location is the cytoplasm. In terms of biological role, transcriptional coactivator of the p300/CBP-mediated transcription complex. Enhances SMAD-mediated transcription by strengthening the functional link between the DNA-binding SMAD transcription factors and the p300/CBP transcription coactivator complex. Stimulates estrogen-dependent transactivation activity mediated by estrogen receptors signaling; stabilizes the interaction of estrogen receptor ESR1 and histone acetyltransferase EP300. Positively regulates TGF-beta signaling through its association with the SMAD/p300/CBP-mediated transcriptional coactivator complex. Induces transcription from estrogen-responsive promoters and protection against cell death. Potentiates EGR2-mediated transcriptional activation activity from the ERBB2 promoter. Acts as an inhibitor of osteoblastic mineralization through a cAMP-dependent parathyroid hormone receptor signaling. May play a role in pigmentation of melanocytes. Associates with chromatin to the estrogen-responsive TGF-alpha promoter region in a estrogen-dependent manner. The chain is Cbp/p300-interacting transactivator 1 (Cited1) from Mus musculus (Mouse).